Here is a 397-residue protein sequence, read N- to C-terminus: Iripin-2 (397 aa).

The N-terminal stretch at 1-21 (MEDFKMKTLAAFLSLLVLCWA) is a signal peptide. Asn109 and Asn270 each carry an N-linked (GlcNAc...) asparagine glycan.

Belongs to the serpin family. As to quaternary structure, interacts with mouse MCPT4. As to expression, female salivary gland. Ovary. Midgut.

It is found in the secreted. Functionally, serine protease inhibitor that modulates blood feeding of ticks on vertebrate species. Inhibits host trypsin, thrombin (F2), alpha-chymotrypsin, cathepsin G (CTSG) and mast cell chymase (CMA1). Inhibits host cathepsin G- and thrombin-induced platelet aggregation. Inhibits acute inflammation in the host. Suppresses neutrophil recruitment in inflamed area. Does not inhibit host plasmin (PLG), factor Xa (F10), factor XIa (F11), elastase and proteinase 3/myeloblastin (PRTN3). In terms of biological role, (Microbial infection) Inhibits IL6 production by mouse splenic dendritic cells in response to Borrelia burgdorferi exposure. Decreases levels of STAT3 phosphorylation in mouse splenic dendritic cells in response to Borrelia burgdorferi exposure and in Borrelia-primed CD4+ T-lymphocytes. Inhibits differentiation of mouse Th17 cells, a subset of CD4+ T-lymphocytes that play a crucial role in protection against extracellular bacteria, in response to Borrelia burgdorferi exposure via inhibition of the IL6/STAT3 signaling pathway. The protein is Iripin-2 of Ixodes ricinus (Common tick).